Consider the following 357-residue polypeptide: Glucose-6-phosphatase catalytic subunit 1 (357 aa).

Residues 1–28 are Lumenal-facing; the sequence is MEEGMNILHDFGIQSTRYLQVNYQDSQD. Residues 29–49 form a helical membrane-spanning segment; sequence WFILVSVIADLRNAFYVLFPI. Over 50-60 the chain is Cytoplasmic; the sequence is WFHLKETVGIN. Residues 61–81 traverse the membrane as a helical segment; it reads LLWVAVVGDWFNLVFKWILFG. Over 82 to 117 the chain is Lumenal; it reads QRPYWWVLDTDYYSNSSVPIIKQFPVTCETGPGSPS. Position 83 (arginine 83) interacts with substrate. The N-linked (GlcNAc...) asparagine glycan is linked to asparagine 96. Residues 118–138 traverse the membrane as a helical segment; it reads GHAMGAAGVYYVMVTSTLAIF. Histidine 119 (proton donor) is an active-site residue. The Cytoplasmic portion of the chain corresponds to 139–147; it reads RGKKKPTYG. Residues 148–168 traverse the membrane as a helical segment; the sequence is FRCLNVILWLGFWAVQLNVCL. The Lumenal segment spans residues 169–179; the sequence is SRIYLAAHFPH. A substrate-binding site is contributed by arginine 170. The active-site Nucleophile is histidine 176. The chain crosses the membrane as a helical span at residues 180-202; that stretch reads QVVAGVLSGIAVAETFSHIRGIY. Topologically, residues 203-211 are cytoplasmic; it reads NASLRKYCL. Residues 212–232 form a helical membrane-spanning segment; sequence ITIFLFGFALGFYLLLKGLGV. The Lumenal segment spans residues 233-254; the sequence is DLLWTLEKAKRWCERPEWVHLD. The chain crosses the membrane as a helical span at residues 255–275; it reads TTPFASLFKNLGTLLGLGLAL. At 276 to 291 the chain is on the cytoplasmic side; sequence NSSMYRKSCKGELSKL. A helical transmembrane segment spans residues 292 to 312; it reads LPFRFACIVASLVLLHLFDSL. Residues 313–320 lie on the Lumenal side of the membrane; that stretch reads KPPSQVEL. A helical membrane pass occupies residues 321–341; it reads IFYILSFCKSATVPFASVSLI. Topologically, residues 342–357 are cytoplasmic; the sequence is PYCLARILGQTHKKSL. The Prevents secretion from ER motif lies at 354-357; that stretch reads KKSL.

The protein belongs to the glucose-6-phosphatase family. Liver and kidney.

Its subcellular location is the endoplasmic reticulum membrane. The catalysed reaction is D-glucose 6-phosphate + H2O = D-glucose + phosphate. The protein operates within carbohydrate biosynthesis; gluconeogenesis. Its function is as follows. Hydrolyzes glucose-6-phosphate to glucose in the endoplasmic reticulum. Forms with the glucose-6-phosphate transporter (SLC37A4/G6PT) the complex responsible for glucose production in the terminal step of glycogenolysis and gluconeogenesis. Hence, it is the key enzyme in homeostatic regulation of blood glucose levels. The polypeptide is Glucose-6-phosphatase catalytic subunit 1 (G6pc1) (Mus musculus (Mouse)).